The following is a 128-amino-acid chain: Prokineticin-2 (128 aa).

The N-terminal stretch at 1 to 26 is a signal peptide; the sequence is MGDPRCAPLLLLLLLPLLFTPPAGDA. Disulfide bonds link C33–C45, C39–C57, C44–C106, C67–C114, and C108–C124.

This sequence belongs to the AVIT (prokineticin) family. Expressed in the SCN and among a few other discrete brain areas, including the islands of Calleja, media l preoptic area of the hypothalamus and the shell of the nucleus accumbens. Highly expressed in testis. In the SCN, expression subjected to high amplitude of circadian oscillation.

It localises to the secreted. May function as an output molecule from the suprachiasmatic nucleus (SCN) that transmits behavioral circadian rhythm. May also function locally within the SCN to synchronize output. Potently contracts gastrointestinal (GI) smooth muscle. This chain is Prokineticin-2 (Prok2), found in Mus musculus (Mouse).